A 357-amino-acid chain; its full sequence is tRNA N6-adenosine threonylcarbamoyltransferase (357 aa).

The Fe cation site is built by histidine 115 and histidine 119. Substrate-binding positions include 137–141 (LASGG), aspartate 170, glycine 183, and asparagine 281. Fe cation is bound at residue aspartate 309.

Belongs to the KAE1 / TsaD family. Fe(2+) is required as a cofactor.

Its subcellular location is the cytoplasm. It catalyses the reaction L-threonylcarbamoyladenylate + adenosine(37) in tRNA = N(6)-L-threonylcarbamoyladenosine(37) in tRNA + AMP + H(+). Functionally, required for the formation of a threonylcarbamoyl group on adenosine at position 37 (t(6)A37) in tRNAs that read codons beginning with adenine. Is involved in the transfer of the threonylcarbamoyl moiety of threonylcarbamoyl-AMP (TC-AMP) to the N6 group of A37, together with TsaE and TsaB. TsaD likely plays a direct catalytic role in this reaction. The protein is tRNA N6-adenosine threonylcarbamoyltransferase of Bradyrhizobium diazoefficiens (strain JCM 10833 / BCRC 13528 / IAM 13628 / NBRC 14792 / USDA 110).